The chain runs to 1150 residues: Cohesin subunit SCC3 (1150 aa).

Residues 1–12 show a composition bias toward basic residues; the sequence is MTAVRRSTRIRT. A disordered region spans residues 1–122; it reads MTAVRRSTRI…PAYHRSKKDQ (122 aa). Ser-28 carries the post-translational modification Phosphoserine. Basic and acidic residues predominate over residues 32–43; sequence VESDKITAKTQH. The span at 44-72 shows a compositional bias: acidic residues; that stretch reads EEEEEQDTGESEESSSEDDYEDQDDDDYV. A compositionally biased stretch (basic residues) spans 77–87; that stretch reads AKRKSRKRKPK. The stretch at 305 to 349 forms a coiled coil; that stretch reads LTQQAVNLEKNYLAKLSKQLSLEEKKKRPNNKTLEKLESTIAETQ. One can recognise an SCD domain in the interval 367-457; that stretch reads FVHRYKDVSD…ERFKTKILEV (91 aa). Ser-628 carries the phosphoserine modification. Positions 1065-1150 are disordered; it reads ENPEPNKKNI…IDNSDEITQD (86 aa). Residues 1083-1101 are compositionally biased toward basic and acidic residues; the sequence is QREKAPLQPNSERETDHAN.

The protein belongs to the SCC3 family. As to quaternary structure, interacts directly with MCD1 in cohesin complex. Cohesin complexes are composed of the SMC1 and SMC3 heterodimer attached via their hinge domain, MCD1 which link them, and IRR1/SCC3, which interacts with MCD1. The cohesin complex also interacts with SCC2, which is required for its association with chromosomes. Interacts with LIN1. Post-translationally, acetylated by ECO1.

Its subcellular location is the nucleus. It localises to the chromosome. The protein localises to the centromere. Its function is as follows. Component of cohesin complex, a complex required for the cohesion of sister chromatids after DNA replication. The cohesin complex apparently forms a large proteinaceous ring within which sister chromatids can be trapped. At anaphase, the MCD1/SCC1 subunit of the complex is cleaved and dissociates from chromatin, allowing sister chromatids to segregate. The cohesin complex may also play a role in spindle pole assembly during mitosis. This Saccharomyces cerevisiae (strain ATCC 204508 / S288c) (Baker's yeast) protein is Cohesin subunit SCC3 (IRR1).